The sequence spans 295 residues: Autophagy-related protein 37 (295 aa).

Residues 5–103 (VDRVFVHALN…LIDTMHRYAT (99 aa)) enclose the ACB domain. 2 disordered regions span residues 124 to 162 (NSPS…PLKE) and 174 to 201 (LRSQ…RWQR). Over residues 125–153 (SPSSSLSSPRPNQSTGAGAQQPQQEPEQA) the composition is skewed to low complexity. The N-linked (GlcNAc...) asparagine glycan is linked to Asn136. Residues 244-264 (WLLVKHIFADLVILSVVLLWL) traverse the membrane as a helical segment.

It belongs to the ATG37 family.

It localises to the peroxisome membrane. In terms of biological role, acyl-CoA binding protein which acts as the peroxisome receptor for pexophagy. Required for both micropexophagy and macropexophagy, but not for the cytoplasm to vacuole transport (Cvt) or autophagy pathways. Required for functional micropexophagic apparatus (MIPA) and relocation of ATG11 to the peroxisome-sequestering arms of the vacuole. Binds palmitoyl-CoA but not oleyl-CoA. The protein is Autophagy-related protein 37 of Gibberella zeae (strain ATCC MYA-4620 / CBS 123657 / FGSC 9075 / NRRL 31084 / PH-1) (Wheat head blight fungus).